Here is a 113-residue protein sequence, read N- to C-terminus: uncharacterized protein (113 aa).

Residues 16–113 form the HTH hxlR-type domain; sequence TPFGYTLSLI…CEWGVKNQNN (98 aa).

This is an uncharacterized protein from Halalkalibacterium halodurans (strain ATCC BAA-125 / DSM 18197 / FERM 7344 / JCM 9153 / C-125) (Bacillus halodurans).